The sequence spans 153 residues: SKP1-like protein 9 (153 aa).

The segment at 95–153 (IKAANYLNIKSLFDLACQTVAEIIKGNTPEQIREFFNIENDLTPEEEAAIRRENKWAFE) is interaction with the F-box domain of F-box proteins.

It belongs to the SKP1 family. Part of a SCF (SKP1-cullin-F-box) protein ligase complex. Interacts with CPR1/CPR30 and At3g61590. As to expression, expressed in leaves, shoot apical meristem (SAM), roots, flowers and pollen.

The protein localises to the nucleus. Its pathway is protein modification; protein ubiquitination. In terms of biological role, involved in ubiquitination and subsequent proteasomal degradation of target proteins. Together with CUL1, RBX1 and a F-box protein, it forms a SCF E3 ubiquitin ligase complex. The functional specificity of this complex depends on the type of F-box protein. In the SCF complex, it serves as an adapter that links the F-box protein to CUL1. The sequence is that of SKP1-like protein 9 (ASK9) from Arabidopsis thaliana (Mouse-ear cress).